We begin with the raw amino-acid sequence, 118 residues long: Putative membrane protein insertion efficiency factor (118 aa).

Belongs to the UPF0161 family.

It localises to the cell inner membrane. Its function is as follows. Could be involved in insertion of integral membrane proteins into the membrane. This chain is Putative membrane protein insertion efficiency factor, found in Helicobacter pylori (strain HPAG1).